Reading from the N-terminus, the 657-residue chain is Methylenetetrahydrofolate reductase 1 (657 aa).

E18 functions as the Proton donor/acceptor in the catalytic mechanism. NAD(+) is bound by residues 18 to 23 and 49 to 50; these read EFFPPK and TW. FAD contacts are provided by residues 49–50, H78, and 108–110; these read TW and RGD. D110 is a substrate binding site. At S120 the chain carries Phosphoserine. Residues 129–130, Y152, D171, and K178 contribute to the FAD site; that span reads YA. Positions 189 and 286 each coordinate substrate. S301 is subject to Phosphoserine. Residues 308 to 329 are disordered; it reads VNESSEEEGEDETSGEIGSIEN. The segment covering 311–321 has biased composition (acidic residues); sequence SSEEEGEDETS. Residue S358 is modified to Phosphoserine.

It belongs to the methylenetetrahydrofolate reductase family. FAD is required as a cofactor.

It catalyses the reaction (6S)-5-methyl-5,6,7,8-tetrahydrofolate + NADP(+) = (6R)-5,10-methylene-5,6,7,8-tetrahydrofolate + NADPH + H(+). The catalysed reaction is (6S)-5-methyl-5,6,7,8-tetrahydrofolate + NAD(+) = (6R)-5,10-methylene-5,6,7,8-tetrahydrofolate + NADH + H(+). It participates in one-carbon metabolism; tetrahydrofolate interconversion. This is Methylenetetrahydrofolate reductase 1 (MET12) from Saccharomyces cerevisiae (strain ATCC 204508 / S288c) (Baker's yeast).